A 409-amino-acid chain; its full sequence is Peptidase T (409 aa).

Zn(2+) is bound at residue histidine 78. Residue aspartate 80 is part of the active site. Residue aspartate 140 participates in Zn(2+) binding. The active-site Proton acceptor is the glutamate 173. Zn(2+) contacts are provided by glutamate 174, aspartate 196, and histidine 379.

The protein belongs to the peptidase M20B family. The cofactor is Zn(2+).

It is found in the cytoplasm. The catalysed reaction is Release of the N-terminal residue from a tripeptide.. Cleaves the N-terminal amino acid of tripeptides. The sequence is that of Peptidase T from Salmonella enteritidis PT4 (strain P125109).